Here is a 424-residue protein sequence, read N- to C-terminus: GTPase Obg (424 aa).

The region spanning 2–158 is the Obg domain; that stretch reads AKFIDQVKIM…YEANIVLKIL (157 aa). Residues 159–326 enclose the OBG-type G domain; it reads SDVGLVGLPS…LKKIIWEFLE (168 aa). GTP is bound by residues 165 to 172, 190 to 194, 211 to 214, 280 to 283, and 307 to 309; these read GLPSCGKS, FTTLV, DLPG, NKSD, and SAL. The Mg(2+) site is built by Ser172 and Thr192. Positions 344 to 422 constitute an OCT domain; that stretch reads KEINYEPDFV…IYQHKFEWEE (79 aa).

It belongs to the TRAFAC class OBG-HflX-like GTPase superfamily. OBG GTPase family. In terms of assembly, monomer. Requires Mg(2+) as cofactor.

The protein resides in the cytoplasm. An essential GTPase which binds GTP, GDP and possibly (p)ppGpp with moderate affinity, with high nucleotide exchange rates and a fairly low GTP hydrolysis rate. Plays a role in control of the cell cycle, stress response, ribosome biogenesis and in those bacteria that undergo differentiation, in morphogenesis control. The polypeptide is GTPase Obg (Mycoplasmopsis synoviae (strain 53) (Mycoplasma synoviae)).